A 157-amino-acid polypeptide reads, in one-letter code: Transcriptional repressor NrdR (157 aa).

Residues 1–22 (MRCPKCGATKSSVIDSRQAEEG) form a disordered region. A zinc finger lies at 3 to 34 (CPKCGATKSSVIDSRQAEEGNTIRRRRECDEC). Positions 49–139 (LVVVKKDGTR…VYRSFKDVSE (91 aa)) constitute an ATP-cone domain.

The protein belongs to the NrdR family. Requires Zn(2+) as cofactor.

Its function is as follows. Negatively regulates transcription of bacterial ribonucleotide reductase nrd genes and operons by binding to NrdR-boxes. This chain is Transcriptional repressor NrdR, found in Streptococcus pneumoniae (strain Hungary19A-6).